Consider the following 633-residue polypeptide: MNLEILELFNGHIDNIPNILPHQLATLDYLLRTILDHNESVLLFHIMGSGKTIIALLFALIVSKFKKVYILVPNINILNIFTYNLDLATNLINTEYVIENIHIYSTINFYSLNYNDNVVNYNALSKYNDSIFIIDEAHNIFGNNTGELMTIIKNKNKVPFLLLSGSPITNTPITLSNIISIMSDEGINFNDIIIQGKKVFQIILNEKGVSVLKNILKNKISYYELCDTELPSIIFHGKEFLDTKVVYCKMSKLQETDYINVRKLCNNEMFEKNMTNVSLAVLGPLNLANSLELLFVEQDKELYPNLKINDGVLYGDELTKLNISSKFKYFIDTIGNLTGKNFIYFSNSTYGGLVIKYIMLNNGYSEYAGSQGTNPKMINGHLKTFAIVTSKMKSSLEDLLEVYNSPGNDNGEKIMFLFSSNIMSESYTLKEVRNIWFMTIPDTFSQYNQILGRSIRKFSYKDVSKPVNVYLLATVYSDFNDTITSLDDYSIDDINTLPFDIKKLLYLKFKTKETKRIYSILKDLSINYRSSPHPYITDVVLGELVRQFFYHNSRVSINDAKLFKMVNSIFKSKEKTQKYIEKITDDHFFVTNKVFEKSLLYKHKNDIIVVPFNLLFTEYSWMINFRKELNVVV.

Positions 32 to 185 constitute a Helicase ATP-binding domain; sequence RTILDHNESV…SNIISIMSDE (154 aa). 45-52 contacts ATP; sequence HIMGSGKT. A DEXH box motif is present at residues 135–138; that stretch reads DEAH. In terms of domain architecture, Helicase C-terminal spans 326–505; that stretch reads KFKYFIDTIG…TLPFDIKKLL (180 aa).

Belongs to the helicase family. VETF subfamily. As to quaternary structure, heterodimer of a 70 kDa and a 82 kDa subunit. Part of the early transcription complex composed of ETF, RAP94, and the DNA-directed RNA polymerase.

Its subcellular location is the virion. Its function is as follows. Acts with RNA polymerase to initiate transcription from early gene promoters. Is recruited by the RPO-associated protein of 94 kDa (RAP94) to form the early transcription complex, which also contains the core RNA polymerase. ETF heterodimer binds to early gene promoters. The protein is Early transcription factor 70 kDa subunit (VETFS) of Vertebrata (FPV).